Here is a 311-residue protein sequence, read N- to C-terminus: MNPKKLVIASRESLLAMWQAKHIQGRLKALYPDCEVEILGMTTRGDQILDKTLSKVGGKGLFVKELEQALYDGRADLAVHSIKDVPMDLPEGFALAAIGERANPFDAFVSNQYTRLEEMPEGAVVGTSSLRREAQLRARYPHLLIKPLRGNVQTRLSKLDNGEYDAIILAAAGLQRLKLDGRIRMILSESDSLPAAGQGALGIEIAAHREDLYEVLKPLNHGVTNACVTAERALARALGGSCQVPLAAYCTEENGLLTLRGLVGHPDGSVVLRADAQAPAEYADALGRAVAKKLADDGARELIGAVLNTEN.

Cysteine 242 is subject to S-(dipyrrolylmethanemethyl)cysteine.

The protein belongs to the HMBS family. As to quaternary structure, monomer. It depends on dipyrromethane as a cofactor.

The catalysed reaction is 4 porphobilinogen + H2O = hydroxymethylbilane + 4 NH4(+). It participates in porphyrin-containing compound metabolism; protoporphyrin-IX biosynthesis; coproporphyrinogen-III from 5-aminolevulinate: step 2/4. In terms of biological role, tetrapolymerization of the monopyrrole PBG into the hydroxymethylbilane pre-uroporphyrinogen in several discrete steps. In Neisseria meningitidis serogroup B (strain ATCC BAA-335 / MC58), this protein is Porphobilinogen deaminase (hemC).